Reading from the N-terminus, the 493-residue chain is Cytochrome P450 710A4 (493 aa).

Residues 5-25 (VSLFASLTPYLVSALLLFLLL) traverse the membrane as a helical segment. Heme is bound at residue C435.

It belongs to the cytochrome P450 family. Heme is required as a cofactor. Very weak expression in roots and root hairs. Not detected in the root tips.

Its subcellular location is the membrane. It catalyses the reaction 5-dehydroepisterol + NADPH + O2 + H(+) = ergosta-5,7,22,24(28)-tetraen-3beta-ol + NADP(+) + 2 H2O. It functions in the pathway steroid biosynthesis; sterol biosynthesis. Functionally, required to form the C-22 double bond in the sterol side chain. Possesses C-22 desaturase activity toward beta-sitosterol and produces stigmasterol. The chain is Cytochrome P450 710A4 from Arabidopsis thaliana (Mouse-ear cress).